The primary structure comprises 80 residues: Ataxin-8 (80 aa).

Specifically found in brains from SCA8 patients (at protein level).

The protein resides in the nucleus. In Homo sapiens (Human), this protein is Ataxin-8 (ATXN8).